We begin with the raw amino-acid sequence, 94 residues long: Neurotoxin 213 (94 aa).

The N-terminal stretch at 1–22 (MLKFILTCTSVILFTAVEDSSC) is a signal peptide. The 65-residue stretch at 24-88 (KGGNYPISVY…YWDYHRNNCK (65 aa)) folds into the LCN-type CS-alpha/beta domain. Disulfide bonds link cysteine 39-cysteine 62, cysteine 48-cysteine 67, and cysteine 52-cysteine 69.

It belongs to the long (3 C-C) scorpion toxin superfamily. Expressed by the venom gland.

The protein localises to the secreted. This chain is Neurotoxin 213, found in Lychas mucronatus (Chinese swimming scorpion).